We begin with the raw amino-acid sequence, 585 residues long: MSQTEQAVREDGVIRSVSGPVVTARGLDARMNDVVYVGDEGLMGEVIEIEDNVTTVQVYEETSGIGPDEPVRNTGEPLSVDLGPGLLDTIYDGVQRPLDILEDKMGSPYLDRGVDAPGIELDTEWEFEPTVSEGDTVESGDEVGIVEETVTIDHKVLVPPDYEGGEVTTVKSGEFTVEETVVELSSGESVQMRQEWPVREPRPTVEKKTPREPLVSGQRILDGLFPIAKGGTAAIPGPFGSGKTVTQHQLAKYADADIIIYVGCGERGNEMTEVIDDFPELEDPSTGNPLMARTSLIANTSNMPVAARESCVYTGITIAEFYRDMGYDVALMADSTSRWAEAMREISSRLEEMPGEEGYPAYLAARLAQFYERAGYFENVNGTEGSVSAIGAVSPPGGDFSEPVTQNTLRIVKTFWALDADLAERRHFPSINWDESYSLYKEQLDPWFQENVEDDWPEERQWAVDVLDEESELQEIVQLVGKDALPDDQQLTLEVARYLRESYLQQNAFHPVDTYCSPEKTYLTVTAIHQFNDEAFEALDAGVPVDEIISIDAAPRLNRIGVQDDYEEYIATLKEDIATQLQELY.

Residues methionine 192–arginine 211 form a disordered region. Residues tryptophan 196–arginine 211 show a composition bias toward basic and acidic residues. Glycine 237–threonine 244 is a binding site for ATP.

The protein belongs to the ATPase alpha/beta chains family. Has multiple subunits with at least A(3), B(3), C, D, E, F, H, I and proteolipid K(x).

Its subcellular location is the cell membrane. It catalyses the reaction ATP + H2O + 4 H(+)(in) = ADP + phosphate + 5 H(+)(out). In terms of biological role, component of the A-type ATP synthase that produces ATP from ADP in the presence of a proton gradient across the membrane. The A chain is the catalytic subunit. The chain is A-type ATP synthase subunit A from Haloquadratum walsbyi (strain DSM 16790 / HBSQ001).